Here is a 680-residue protein sequence, read N- to C-terminus: NADPH--cytochrome P450 reductase (680 aa).

The Lumenal segment spans residues methionine 1–lysine 5. Residues leucine 6 to alanine 23 traverse the membrane as a helical segment. The Cytoplasmic portion of the chain corresponds to lysine 24–tryptophan 680. The region spanning threonine 60–phenylalanine 204 is the Flavodoxin-like domain. FMN is bound by residues serine 66–alanine 71, alanine 117–glycine 120, leucine 152–asparagine 161, and aspartate 187. In terms of domain architecture, FAD-binding FR-type spans threonine 264–phenylalanine 509. Arginine 283 contacts NADP(+). FAD-binding positions include arginine 439–serine 442, threonine 457–valine 459, and glycine 473–threonine 476. Residues threonine 537, serine 599–arginine 600, lysine 606–glutamine 610, and aspartate 642 each bind NADP(+). Tryptophan 680 contacts FAD.

This sequence belongs to the NADPH--cytochrome P450 reductase family. In the N-terminal section; belongs to the flavodoxin family. It in the C-terminal section; belongs to the flavoprotein pyridine nucleotide cytochrome reductase family. The cofactor is FAD. FMN is required as a cofactor.

It localises to the endoplasmic reticulum membrane. It is found in the mitochondrion outer membrane. Its subcellular location is the cell membrane. It carries out the reaction 2 oxidized [cytochrome P450] + NADPH = 2 reduced [cytochrome P450] + NADP(+) + H(+). This enzyme is required for electron transfer from NADP to cytochrome P450 in microsomes. It can also provide electron transfer to heme oxygenase and cytochrome B5. Involved in ergosterol biosynthesis. The protein is NADPH--cytochrome P450 reductase of Candida maltosa (Yeast).